Consider the following 950-residue polypeptide: Protocadherin alpha-3 (950 aa).

The N-terminal stretch at 1-29 is a signal peptide; that stretch reads MLFSWREDPGAQCLLLSLLLLAASEVGSG. 6 Cadherin domains span residues 30–133, 134–242, 243–350, 351–455, 456–565, and 581–678; these read QLHY…APVF, PMSV…APAF, ERTI…VPEL, VIHS…APAF, SQSE…APAL, and VPRS…APKA. Residues 30-697 lie on the Extracellular side of the membrane; the sequence is QLHYSVSEEA…GPEAALVDVN (668 aa). Asparagine 257 and asparagine 265 each carry an N-linked (GlcNAc...) asparagine glycan. The N-linked (GlcNAc...) asparagine glycan is linked to asparagine 548. The helical transmembrane segment at 698 to 718 threads the bilayer; that stretch reads VYLIVAICAVSSLLVLTLLLY. The Cytoplasmic portion of the chain corresponds to 719–950; that stretch reads TALRCSAPPT…GNSTTDNSDQ (232 aa). 2 PXXP repeats span residues 734 to 737 and 774 to 777; these read PGKP and PSLP. The 6 X 4 AA repeats of P-X-X-P stretch occupies residues 734-894; the sequence is PGKPTLVCSS…PDKFIIPGSP (161 aa). Disordered regions lie at residues 777–806, 831–856, and 869–889; these read PPCPISRDREEKQDVDVDLSAKPRQPNPDW, GPGGPDQQWPTVSSATPEPEAGEVSP, and FKYGPGNPKQSGPGELPDKFI. Positions 782 to 797 are enriched in basic and acidic residues; the sequence is SRDREEKQDVDVDLSA. PXXP repeat units follow at residues 799 to 802, 832 to 835, 873 to 876, and 891 to 894; these read PRQP, PGGP, PGNP, and PGSP. The tract at residues 901-950 is disordered; the sequence is QEPANSQIDKSDFITFGKKEETKKKKKKKKGNKTQEKKEKGNSTTDNSDQ. Over residues 909 to 923 the composition is skewed to basic and acidic residues; it reads DKSDFITFGKKEETK.

The protein localises to the cell membrane. In terms of biological role, potential calcium-dependent cell-adhesion protein. May be involved in the establishment and maintenance of specific neuronal connections in the brain. The chain is Protocadherin alpha-3 (PCDHA3) from Pan troglodytes (Chimpanzee).